The sequence spans 144 residues: Transcriptional regulator SlyA (144 aa).

In terms of domain architecture, HTH marR-type spans 2-135; that stretch reads ESPLGSDLSR…LSQMISKLEK (134 aa). A DNA-binding region (H-T-H motif) is located at residues 49-72; it reads QIQLAKAIGIEQPSLVRTLDQLEE.

It belongs to the SlyA family. Homodimer.

In terms of biological role, transcription regulator that can specifically activate or repress expression of target genes. In Wigglesworthia glossinidia brevipalpis, this protein is Transcriptional regulator SlyA.